We begin with the raw amino-acid sequence, 474 residues long: Shugoshin-1 (474 aa).

4 disordered regions span residues methionine 1–alanine 53, valine 189–serine 226, asparagine 322–lysine 356, and valine 422–asparagine 442. 2 stretches are compositionally biased toward polar residues: residues glycine 12 to serine 22 and glutamate 190 to cysteine 201. Positions lysine 211–serine 220 are enriched in basic residues. Polar residues-rich tracts occupy residues asparagine 322–aspartate 341 and valine 422–glutamate 431.

The protein belongs to the shugoshin family. Highly expressed in tissues containing meiocytes. Expressed at much lower level in leaves and pollen-containing flowers.

It localises to the nucleus. The protein resides in the chromosome. The protein localises to the centromere. Its function is as follows. Plays a central role in chromosome cohesion during meiosis I by preventing premature dissociation of cohesin complex from centromeres after prophase, when most of cohesin complex dissociates from chromosomes arms. Required for maintenance of centromeric cohesion before prophase II and correct segregation of chromatids during meiosis II. Has apparently no function in mitosis. In Zea mays (Maize), this protein is Shugoshin-1.